We begin with the raw amino-acid sequence, 333 residues long: Syntaxin-4 (333 aa).

The Cytoplasmic portion of the chain corresponds to 1 to 312 (MGKDRLPELL…QHQKKARKKK (312 aa)). The span at 50–66 (YSVVSQNSHSCSNNNSS) shows a compositional bias: low complexity. A disordered region spans residues 50–81 (YSVVSQNSHSCSNNNSSTEPKDRSSSKMTQYG). The stretch at 91-116 (YTEIRQQLAQIAANLETMNRMAQTVN) forms a coiled coil. The t-SNARE coiled-coil homology domain maps to 239–301 (LREMMDRFNE…DKGADELDQA (63 aa)). Residues 313–333 (IMLIVILAAVLLVLLLVGIYL) traverse the membrane as a helical; Anchor for type IV membrane protein segment.

Belongs to the syntaxin family.

It localises to the membrane. Potentially involved in docking of synaptic vesicles at presynaptic active zones. The sequence is that of Syntaxin-4 from Drosophila melanogaster (Fruit fly).